The chain runs to 178 residues: Ribosomal RNA small subunit methyltransferase G (178 aa).

Residues Gly-54, Leu-59, 105-106 (LE), and Arg-120 each bind S-adenosyl-L-methionine.

The protein belongs to the methyltransferase superfamily. RNA methyltransferase RsmG family.

The protein resides in the cytoplasm. The catalysed reaction is guanosine(527) in 16S rRNA + S-adenosyl-L-methionine = N(7)-methylguanosine(527) in 16S rRNA + S-adenosyl-L-homocysteine. In terms of biological role, specifically methylates the N7 position of guanine in position 527 of 16S rRNA. This chain is Ribosomal RNA small subunit methyltransferase G, found in Helicobacter pylori (strain J99 / ATCC 700824) (Campylobacter pylori J99).